The chain runs to 303 residues: Growth/differentiation factor 15 (303 aa).

The signal sequence occupies residues 1 to 30 (MAPPALQAQPPGGSQLRFLLFLLLLLLLLS). The propeptide occupies 31–188 (WPSQGDALAM…LRVAAGRGRR (158 aa)). The N-linked (GlcNAc...) asparagine glycan is linked to Asn-71. Intrachain disulfides connect Cys-198–Cys-205, Cys-206–Cys-269, Cys-235–Cys-300, and Cys-239–Cys-302.

This sequence belongs to the TGF-beta family. In terms of assembly, homodimer; disulfide-linked. Interacts with GFRAL and RET; ligand of GFRAL, which mediates GDF15 internalization and cellular signaling through interaction with RET via the formation of a 2:2:2 ternary complex composed of GDF15, GFRAL and RET. As to expression, detected in plasma (at protein level). Highly expressed in liver. Expressed in the distal small intestine, colon and kidney. Expressed in skeletal muscle in response to mitochondrial stress. Expressed by cardiomyocytes, expression is highly increased in heart diseases. Also detected in subcutaneous fat.

It localises to the secreted. Hormone produced in response to various stresses to confer information about those stresses to the brain, and trigger an aversive response, characterized by nausea and/or loss of appetite. The aversive response is both required to reduce continuing exposure to those stresses at the time of exposure and to promote avoidance behavior in the future. Acts by binding to its receptor, GFRAL, activating GFRAL-expressing neurons localized in the area postrema and nucleus tractus solitarius of the brainstem. It then triggers the activation of neurons localized within the parabrachial nucleus and central amygdala, which constitutes part of the 'emergency circuit' that shapes responses to stressful conditions. The GDF15-GFRAL signal induces expression of genes involved in metabolism, such as lipid metabolism in adipose tissues. Required for avoidance behavior in response to food allergens: induced downstream of mast cell activation to promote aversion and minimize harmful effects of exposure to noxious substances. In addition to suppress appetite, also promotes weight loss by enhancing energy expenditure in muscle: acts by increasing calcium futile cycling in muscle. Contributes to the effect of metformin, an anti-diabetic drug, on appetite reduction and weight loss: produced in the kidney in response to metformin treatment, thereby activating the GDF15-GFRAL response, leading to reduced appetite and weight. Produced in response to anticancer drugs, such as camptothecin or cisplatin, promoting nausea and contributing to malnutrition. Overproduced in many cancers, promoting anorexia in cancer (cachexia). Responsible for the risk of nausea during pregnancy: high levels of GDF15 during pregnancy, mostly originating from embryos, are associated with increased nausea. Maternal sensitivity to nausea is probably determined by pre-pregnancy exposure to GDF15, females with naturally high level of GDF15 being less susceptible to nausea than female mice with low levels of GDF15 before pregnancy. Promotes metabolic adaptation in response to systemic inflammation caused by bacterial and viral infections in order to promote tissue tolerance and prevent tissue damage. Required for tissue tolerance in response to myocardial infarction by acting as an inhibitor of leukocyte integring activation, thereby protecting against cardiac rupture. Inhibits growth hormone signaling on hepatocytes. This chain is Growth/differentiation factor 15, found in Mus musculus (Mouse).